Reading from the N-terminus, the 427-residue chain is MVRLEKKDPLMLARQLPLKSVALILAGGRGTRLKDLTATRAKPAVHFGGKFRIIDFALSNCINSGIRRIGVITQYQSHTLVQHIQRGWSFFSEEMNEFVDLLPAQQRVHGETWYRGTADAVTQNLDIIRRYKAEYVVILAGDHIYKQDYSRMLIDHVEKGARCTVACLPVPVAEARAFGVMAVDENSKVIDFVEKPANPPSMPCDDTKALASMGIYIFDADYLYELLEEDDENESSSHDFGKDIIPKVTYSGEAYAHPFPLSCVQSDPNAEPYWRDVGTLEAYWKANLDLASVTPELDMYDQDWPIRTHMESLPPAKFVQDRSGSHGMTLNSLVSGGCIISGSVVVQSVLFPRVRVNSFCNIDSAVLLPDVWVGRSCRLRRCIIDRACVIPEGMVIGENAEEDARRFYRSEEGIVLVTRDMLARLSA.

Positions 40, 46, and 52 each coordinate AMP. Tyr-114 contacts alpha-D-glucose 1-phosphate. Arg-130 is an AMP binding site. Residues Gly-179, 194–195 (EK), and Ser-212 each bind alpha-D-glucose 1-phosphate. Position 386 (Arg-386) interacts with AMP.

This sequence belongs to the bacterial/plant glucose-1-phosphate adenylyltransferase family. In terms of assembly, homotetramer.

It carries out the reaction alpha-D-glucose 1-phosphate + ATP + H(+) = ADP-alpha-D-glucose + diphosphate. The protein operates within glycan biosynthesis; glycogen biosynthesis. Its activity is regulated as follows. Allosterically activated by fructose-1,6-bisphosphate (F16BP) and inhibited by AMP. In terms of biological role, involved in the biosynthesis of ADP-glucose, a building block required for the elongation reactions to produce glycogen. Catalyzes the reaction between ATP and alpha-D-glucose 1-phosphate (G1P) to produce pyrophosphate and ADP-Glc. This chain is Glucose-1-phosphate adenylyltransferase, found in Cronobacter sakazakii (strain ATCC BAA-894) (Enterobacter sakazakii).